Reading from the N-terminus, the 223-residue chain is Triosephosphate isomerase (223 aa).

6 to 8 (NLK) contacts substrate. The active-site Electrophile is the H86. The Proton acceptor role is filled by E151. 2 residues coordinate substrate: G157 and S187.

This sequence belongs to the triosephosphate isomerase family. Homodimer.

The protein resides in the cytoplasm. It catalyses the reaction D-glyceraldehyde 3-phosphate = dihydroxyacetone phosphate. It participates in carbohydrate biosynthesis; gluconeogenesis. It functions in the pathway carbohydrate degradation; glycolysis; D-glyceraldehyde 3-phosphate from glycerone phosphate: step 1/1. Involved in the gluconeogenesis. Catalyzes stereospecifically the conversion of dihydroxyacetone phosphate (DHAP) to D-glyceraldehyde-3-phosphate (G3P). This is Triosephosphate isomerase from Campylobacter jejuni subsp. doylei (strain ATCC BAA-1458 / RM4099 / 269.97).